We begin with the raw amino-acid sequence, 275 residues long: 3-methyl-2-oxobutanoate hydroxymethyltransferase (275 aa).

Mg(2+) contacts are provided by aspartate 44 and aspartate 83. Residues 44-45 (DS), aspartate 83, and lysine 113 each bind 3-methyl-2-oxobutanoate. Glutamate 115 provides a ligand contact to Mg(2+). Glutamate 182 serves as the catalytic Proton acceptor.

The protein belongs to the PanB family. As to quaternary structure, homodecamer; pentamer of dimers. Requires Mg(2+) as cofactor.

It localises to the cytoplasm. The catalysed reaction is 3-methyl-2-oxobutanoate + (6R)-5,10-methylene-5,6,7,8-tetrahydrofolate + H2O = 2-dehydropantoate + (6S)-5,6,7,8-tetrahydrofolate. The protein operates within cofactor biosynthesis; (R)-pantothenate biosynthesis; (R)-pantoate from 3-methyl-2-oxobutanoate: step 1/2. Its function is as follows. Catalyzes the reversible reaction in which hydroxymethyl group from 5,10-methylenetetrahydrofolate is transferred onto alpha-ketoisovalerate to form ketopantoate. In Clostridium botulinum (strain Kyoto / Type A2), this protein is 3-methyl-2-oxobutanoate hydroxymethyltransferase.